A 117-amino-acid polypeptide reads, in one-letter code: Glycine cleavage system H-like protein (117 aa).

In terms of domain architecture, Lipoyl-binding spans 21–103 (IVKLGLSSQM…ESEGWFVVLQ (83 aa)). The residue at position 62 (Lys-62) is an N6-lipoyllysine.

The protein belongs to the GcvH family. It depends on (R)-lipoate as a cofactor.

The chain is Glycine cleavage system H-like protein from Chlamydia trachomatis serovar D (strain ATCC VR-885 / DSM 19411 / UW-3/Cx).